Consider the following 1001-residue polypeptide: Translation initiation factor IF-2 (1001 aa).

A disordered region spans residues 34-404 (KSHSSTISES…SRGDRRDRKE (371 aa)). Positions 67-80 (SRPESKEDKSDPKQ) are enriched in basic and acidic residues. Composition is skewed to pro residues over residues 98–107 (PARPTPPPRP), 147–157 (PTQPLAPPPVP), and 163–172 (PSKPAPPTPP). Over residues 173 to 190 (AKKAAPAPRLAGPPGRTA) the composition is skewed to low complexity. Composition is skewed to basic and acidic residues over residues 212–230 (SLKD…EEKV) and 238–252 (PKPK…PPRP). Residues 332-342 (DDDDDDLDIDG) are compositionally biased toward acidic residues. 2 stretches are compositionally biased toward low complexity: residues 362–371 (KSLAAKPSTP) and 385–394 (AGSSAGGSSR). Residues 395-404 (SRGDRRDRKE) show a composition bias toward basic and acidic residues. Positions 493-666 (RRPPVVTIMG…LLVSEVEELV (174 aa)) constitute a tr-type G domain. The tract at residues 502-509 (GHVDHGKT) is G1. Residue 502-509 (GHVDHGKT) coordinates GTP. A G2 region spans residues 527–531 (GITQH). The tract at residues 552 to 555 (DTPG) is G3. GTP-binding positions include 552–556 (DTPGH) and 606–609 (NKVD). Positions 606-609 (NKVD) are G4. The G5 stretch occupies residues 642 to 644 (SAL).

Belongs to the TRAFAC class translation factor GTPase superfamily. Classic translation factor GTPase family. IF-2 subfamily.

The protein resides in the cytoplasm. Functionally, one of the essential components for the initiation of protein synthesis. Protects formylmethionyl-tRNA from spontaneous hydrolysis and promotes its binding to the 30S ribosomal subunits. Also involved in the hydrolysis of GTP during the formation of the 70S ribosomal complex. The sequence is that of Translation initiation factor IF-2 (infB) from Synechocystis sp. (strain ATCC 27184 / PCC 6803 / Kazusa).